Consider the following 197-residue polypeptide: uncharacterized protein (197 aa).

The chain crosses the membrane as a helical span at residues 150–172 (SLKLNTTLPMFALNLICLLRSIL).

The protein resides in the membrane. This is an uncharacterized protein from Saccharomyces cerevisiae (strain ATCC 204508 / S288c) (Baker's yeast).